We begin with the raw amino-acid sequence, 440 residues long: Beta-1,3-galactosyl-O-glycosyl-glycoprotein beta-1,6-N-acetylglucosaminyltransferase (440 aa).

The Cytoplasmic segment spans residues 1 to 9 (MKMAGWKKK). A helical; Signal-anchor for type II membrane protein transmembrane segment spans residues 10–30 (LCPGHHLWALGCYMLLAVVSL). At 31-440 (RLSLRFKCDV…RHKAIYGTEL (410 aa)) the chain is on the lumenal side. 2 N-linked (GlcNAc...) asparagine; by host glycosylation sites follow: Asn-72 and Asn-108. 4 disulfide bridges follow: Cys-73/Cys-230, Cys-164/Cys-384, Cys-185/Cys-212, and Cys-393/Cys-425.

This sequence belongs to the glycosyltransferase 14 family.

Its subcellular location is the host Golgi apparatus membrane. The catalysed reaction is a 3-O-[beta-D-galactosyl-(1-&gt;3)-N-acetyl-alpha-D-galactosaminyl]-L-seryl-[protein] + UDP-N-acetyl-alpha-D-glucosamine = 3-O-{beta-D-galactosyl-(1-&gt;3)-[N-acetyl-beta-D-glucosaminyl-(1-&gt;6)]-N-acetyl-alpha-D-galactosaminyl}-L-seryl-[protein] + UDP + H(+). The enzyme catalyses a 3-O-[beta-D-galactosyl-(1-&gt;3)-N-acetyl-alpha-D-galactosaminyl]-L-threonyl-[protein] + UDP-N-acetyl-alpha-D-glucosamine = a 3-O-{beta-D-galactosyl-(1-&gt;3)-[N-acetyl-beta-D-glucosaminyl-(1-&gt;6)]-N-acetyl-alpha-D-galactosaminyl}-L-threonyl-[protein] + UDP + H(+). It carries out the reaction a beta-D-Gal-(1-&gt;4)-beta-D-GlcNAc-(1-&gt;3)-beta-D-Gal-(1-&gt;4)-beta-D-GlcNAc derivative + UDP-N-acetyl-alpha-D-glucosamine = a beta-D-Gal-(1-&gt;4)-beta-D-GlcNAc-(1-&gt;3)-[beta-D-GlcNAc-(1-&gt;6)]-beta-D-Gal-(1-&gt;4)-N-acetyl-beta-D-glucosaminyl derivative + UDP + H(+). It catalyses the reaction 3-O-[N-acetyl-beta-D-glucosaminyl-(1-&gt;3)-N-acetyl-alpha-D-galactosaminyl]-L-seryl-[protein] + UDP-N-acetyl-alpha-D-glucosamine = 3-O-[N-acetyl-beta-D-glucosaminyl-(1-&gt;3)-[N-acetyl-beta-D-glucosaminyl-(1-&gt;6)]-N-acetyl-alpha-D-galactosaminyl]-L-seryl-[protein] + UDP + H(+). The catalysed reaction is a 3-O-[N-acetyl-beta-D-glucosaminyl-(1-&gt;3)-N-acetyl-alpha-D-galactosaminyl]-L-threonyl-[protein] + UDP-N-acetyl-alpha-D-glucosamine = 3-O-[N-acetyl-beta-D-glucosaminyl-(1-&gt;3)-[N-acetyl-beta-D-glucosaminyl-(1-&gt;6)]-N-acetyl-alpha-D-galactosaminyl]-L-threonyl-[protein] + UDP + H(+). The protein operates within protein modification; protein glycosylation. Non-essential glycosyltransferase that can synthesize all known mucin beta 6 N-acetylglucosaminides. Mediates core 2 and core 4 O-glycan branching, 2 important steps in mucin-type biosynthesis. Has also I-branching enzyme activity by converting linear into branched poly-N-acetyllactosaminoglycans. Contributes to the post-translational modifications of structural proteins. In Bovine herpesvirus 4 (strain V. test) (BoHV-4), this protein is Beta-1,3-galactosyl-O-glycosyl-glycoprotein beta-1,6-N-acetylglucosaminyltransferase (Bo17).